The primary structure comprises 2110 residues: Protein Ycf2 (2110 aa).

The tract at residues 190–209 is disordered; sequence DSSQLKGSSDQSRDPLDSIS. 1442–1449 lines the ATP pocket; it reads GSIGTGRS.

The protein belongs to the Ycf2 family.

Its subcellular location is the plastid. The protein resides in the chloroplast stroma. In terms of biological role, probable ATPase of unknown function. Its presence in a non-photosynthetic plant (Epifagus virginiana) and experiments in tobacco indicate that it has an essential function which is probably not related to photosynthesis. This is Protein Ycf2 from Panax ginseng (Korean ginseng).